Here is a 234-residue protein sequence, read N- to C-terminus: Thiamine-phosphate synthase (234 aa).

4-amino-2-methyl-5-(diphosphooxymethyl)pyrimidine contacts are provided by residues 65-69 (QYRNK) and asparagine 97. Mg(2+) is bound by residues aspartate 98 and aspartate 117. Serine 136 contributes to the 4-amino-2-methyl-5-(diphosphooxymethyl)pyrimidine binding site. 163 to 165 (SHT) contributes to the 2-[(2R,5Z)-2-carboxy-4-methylthiazol-5(2H)-ylidene]ethyl phosphate binding site. Lysine 166 provides a ligand contact to 4-amino-2-methyl-5-(diphosphooxymethyl)pyrimidine. Residues glycine 192 and 212–213 (IS) contribute to the 2-[(2R,5Z)-2-carboxy-4-methylthiazol-5(2H)-ylidene]ethyl phosphate site.

The protein belongs to the thiamine-phosphate synthase family. The cofactor is Mg(2+).

The catalysed reaction is 2-[(2R,5Z)-2-carboxy-4-methylthiazol-5(2H)-ylidene]ethyl phosphate + 4-amino-2-methyl-5-(diphosphooxymethyl)pyrimidine + 2 H(+) = thiamine phosphate + CO2 + diphosphate. It carries out the reaction 2-(2-carboxy-4-methylthiazol-5-yl)ethyl phosphate + 4-amino-2-methyl-5-(diphosphooxymethyl)pyrimidine + 2 H(+) = thiamine phosphate + CO2 + diphosphate. The enzyme catalyses 4-methyl-5-(2-phosphooxyethyl)-thiazole + 4-amino-2-methyl-5-(diphosphooxymethyl)pyrimidine + H(+) = thiamine phosphate + diphosphate. It functions in the pathway cofactor biosynthesis; thiamine diphosphate biosynthesis; thiamine phosphate from 4-amino-2-methyl-5-diphosphomethylpyrimidine and 4-methyl-5-(2-phosphoethyl)-thiazole: step 1/1. Condenses 4-methyl-5-(beta-hydroxyethyl)thiazole monophosphate (THZ-P) and 2-methyl-4-amino-5-hydroxymethyl pyrimidine pyrophosphate (HMP-PP) to form thiamine monophosphate (TMP). This chain is Thiamine-phosphate synthase, found in Xylella fastidiosa (strain 9a5c).